Here is a 502-residue protein sequence, read N- to C-terminus: Probable cytosol aminopeptidase (502 aa).

Mn(2+) contacts are provided by Lys-254 and Asp-259. Lys-266 is an active-site residue. Asp-277, Asp-336, and Glu-338 together coordinate Mn(2+). Arg-340 is an active-site residue.

This sequence belongs to the peptidase M17 family. The cofactor is Mn(2+).

The protein resides in the cytoplasm. It catalyses the reaction Release of an N-terminal amino acid, Xaa-|-Yaa-, in which Xaa is preferably Leu, but may be other amino acids including Pro although not Arg or Lys, and Yaa may be Pro. Amino acid amides and methyl esters are also readily hydrolyzed, but rates on arylamides are exceedingly low.. The catalysed reaction is Release of an N-terminal amino acid, preferentially leucine, but not glutamic or aspartic acids.. Functionally, presumably involved in the processing and regular turnover of intracellular proteins. Catalyzes the removal of unsubstituted N-terminal amino acids from various peptides. This Tropheryma whipplei (strain TW08/27) (Whipple's bacillus) protein is Probable cytosol aminopeptidase.